Reading from the N-terminus, the 589-residue chain is PTS system mannitol-specific EIICB component (589 aa).

Over 1–25 (MEEKVSLKVRVQKLGTSLSNMVMPN) the chain is Cytoplasmic. Residues 14–347 (LGTSLSNMVM…LHADKSTEDS (334 aa)) form the PTS EIIC type-2 domain. A helical membrane pass occupies residues 26 to 47 (IGAFIAWGVLTALFIADGYLPN). Residues 48–51 (EQLA) lie on the Extracellular side of the membrane. A helical membrane pass occupies residues 52 to 72 (TVVGPMLTYLLPILIGYTGGY). Residues 73-135 (MIHGQRGAVV…PGFEMLVNNF (63 aa)) are Cytoplasmic-facing. The chain crosses the membrane as a helical span at residues 136-157 (SAGLVGFALLLLAFYAIGPVVS). Residues 158–166 (TLTGAVGNG) are Extracellular-facing. The helical transmembrane segment at 167-187 (VEAIVNARLLPMANIIIEPAK) threads the bilayer. The Cytoplasmic portion of the chain corresponds to 188-274 (VLFLNNALNH…VMMKPTLFLA (87 aa)). A helical transmembrane segment spans residues 275-294 (AMAGGISGTFTFQLLDAGLK). Topologically, residues 295-316 (SPASPGSIIAIMATAPKGVWPH) are extracellular. The helical transmembrane segment at 317 to 338 (LNILLGVLVAAVVSFLIAALIL) threads the bilayer. Residues 339–589 (HADKSTEDSL…YDKMAARMYK (251 aa)) are Cytoplasmic-facing. Positions 381-476 (EKIIFACDAG…SLTGASPIAE (96 aa)) constitute a PTS EIIB type-2 domain. The Phosphocysteine intermediate; for EIIB activity role is filled by cysteine 387. Phosphocysteine; by EIIA is present on cysteine 387.

In terms of assembly, homodimer.

The protein localises to the cell membrane. The enzyme catalyses D-mannitol(out) + N(pros)-phospho-L-histidyl-[protein] = D-mannitol 1-phosphate(in) + L-histidyl-[protein]. The phosphoenolpyruvate-dependent sugar phosphotransferase system (sugar PTS), a major carbohydrate active transport system, catalyzes the phosphorylation of incoming sugar substrates concomitantly with their translocation across the cell membrane. The enzyme II CmtAB PTS system is involved in D-mannitol transport. In Streptococcus pneumoniae (strain ATCC BAA-255 / R6), this protein is PTS system mannitol-specific EIICB component (mtlA).